Consider the following 286-residue polypeptide: 4-hydroxybenzoate octaprenyltransferase (286 aa).

The next 7 helical transmembrane spans lie at 21 to 40, 95 to 115, 142 to 162, 167 to 187, 210 to 230, 235 to 255, and 266 to 286; these read GTLLLLWPCLMALMLAAGGM, ILFVILGLSAFGLVLLLNGLV, FLGIVWSWSIPMAYAAQTGEV, WWLFAANWCWTVAYDTMYAMV, QIIGLFQLAALACFIAAGWSA, LYGLGILTFVGFSTYQQMLIF, and FLNNNWAGLALFVGLGADYLI.

It belongs to the UbiA prenyltransferase family. Mg(2+) is required as a cofactor.

It is found in the cell inner membrane. The enzyme catalyses all-trans-octaprenyl diphosphate + 4-hydroxybenzoate = 4-hydroxy-3-(all-trans-octaprenyl)benzoate + diphosphate. The protein operates within cofactor biosynthesis; ubiquinone biosynthesis. Catalyzes the prenylation of para-hydroxybenzoate (PHB) with an all-trans polyprenyl group. Mediates the second step in the final reaction sequence of ubiquinone-8 (UQ-8) biosynthesis, which is the condensation of the polyisoprenoid side chain with PHB, generating the first membrane-bound Q intermediate 3-octaprenyl-4-hydroxybenzoate. The sequence is that of 4-hydroxybenzoate octaprenyltransferase from Shewanella baltica (strain OS155 / ATCC BAA-1091).